The primary structure comprises 310 residues: Ribosomal RNA small subunit methyltransferase H (310 aa).

S-adenosyl-L-methionine is bound by residues Ala-32–His-34, Asp-51, Phe-78, Asp-99, and Gln-106. Residues Gly-290–Lys-310 are disordered.

It belongs to the methyltransferase superfamily. RsmH family.

It localises to the cytoplasm. The enzyme catalyses cytidine(1402) in 16S rRNA + S-adenosyl-L-methionine = N(4)-methylcytidine(1402) in 16S rRNA + S-adenosyl-L-homocysteine + H(+). Functionally, specifically methylates the N4 position of cytidine in position 1402 (C1402) of 16S rRNA. The protein is Ribosomal RNA small subunit methyltransferase H of Exiguobacterium sp. (strain ATCC BAA-1283 / AT1b).